Reading from the N-terminus, the 425-residue chain is Kynureninase (425 aa).

Pyridoxal 5'-phosphate contacts are provided by residues Leu105, Thr106, 133-136 (FPSD), Asp218, His221, and Tyr243. The residue at position 244 (Lys244) is an N6-(pyridoxal phosphate)lysine. Residues Trp274 and Asn302 each coordinate pyridoxal 5'-phosphate.

The protein belongs to the kynureninase family. As to quaternary structure, homodimer. Pyridoxal 5'-phosphate is required as a cofactor.

It catalyses the reaction L-kynurenine + H2O = anthranilate + L-alanine + H(+). It carries out the reaction 3-hydroxy-L-kynurenine + H2O = 3-hydroxyanthranilate + L-alanine + H(+). It functions in the pathway amino-acid degradation; L-kynurenine degradation; L-alanine and anthranilate from L-kynurenine: step 1/1. It participates in cofactor biosynthesis; NAD(+) biosynthesis; quinolinate from L-kynurenine: step 2/3. Catalyzes the cleavage of L-kynurenine (L-Kyn) and L-3-hydroxykynurenine (L-3OHKyn) into anthranilic acid (AA) and 3-hydroxyanthranilic acid (3-OHAA), respectively. In Christiangramia forsetii (strain DSM 17595 / CGMCC 1.15422 / KT0803) (Gramella forsetii), this protein is Kynureninase.